The primary structure comprises 308 residues: Transcriptional adapter 1-1 (308 aa).

The protein belongs to the TADA1 family. As to quaternary structure, component of the Spt-Ada-Gcn5 acetyltransferase (SAGA) complex consisting of wda/Taf5L, Saf6, Taf9, Taf10b, Taf12, Ada1, Spt3, Spt7, Spt20, Sf3b3, Sf3b5, Nipped-A/Tra1, a histone acetyltransferase (HAT) module made up of Gcn5, Ada2b (Isoform B), Ada3 and Sgf29, and a deubiquitinase (DUB) module made up of not/nonstop, Sgf11 and e(y)2 tethered to SAGA by Atxn7. Not a component of the Ada2a-containing ATAC complex.

The protein localises to the nucleus. In terms of biological role, component of the transcription regulatory complex SAGA, a multiprotein complex that activates transcription by remodeling chromatin and mediating histone acetylation and deubiquitination. The SAGA complex predominantly acetylates histone H3. The chain is Transcriptional adapter 1-1 from Drosophila melanogaster (Fruit fly).